A 520-amino-acid polypeptide reads, in one-letter code: MTQTAHPDSVLIVDFGSQVTQLIARRVREAGVYCEIVPFQSAEEGFKRLQPKAVILSGSPASTVDEGSPRAPQIIFDSGLPVFGICYGQQTMCMQLGGKVESGHHREFGRAFLDVDKDCELFEGLWSSGSRHQVWMSHGDRVTALPDGFKVVATSSNAPFAFIADEKRKYYGVQFHPEVVHTPDGAKLIGNFIHNVAGIKGDWSMSAYRQKAVEEIRKQVGDKRVICALSGGVDSSVAALLIHEAVGDQLTCILVDHGLMRKDEAANVVAMFREHYNLHLLHVDASDRFIGELEGVSDPETKRKIIGRLFIETFEEEAKKLGGADFLGQGTLYPDVIESVSFTGGPSVTIKSHHNVGGLPERMKMQLVEPLRELFKDEVRALGRELGLPDSFIGRHPFPGPGLAIRCPGGITREKLEILREADAIYLDEIRKAGLYDAIWQAFAVLLPVQTVGVMGDGRTYEFVCALRAVTSVDGMTADFYHYDMEFLGRAATRIINEVRGINRVVYDVTSKPPGTIEWE.

The region spanning 9 to 202 (SVLIVDFGSQ…IHNVAGIKGD (194 aa)) is the Glutamine amidotransferase type-1 domain. Cysteine 86 acts as the Nucleophile in catalysis. Active-site residues include histidine 176 and glutamate 178. The 193-residue stretch at 203 to 395 (WSMSAYRQKA…LGLPDSFIGR (193 aa)) folds into the GMPS ATP-PPase domain. Residue 230-236 (SGGVDSS) participates in ATP binding.

In terms of assembly, homodimer.

It catalyses the reaction XMP + L-glutamine + ATP + H2O = GMP + L-glutamate + AMP + diphosphate + 2 H(+). The protein operates within purine metabolism; GMP biosynthesis; GMP from XMP (L-Gln route): step 1/1. Functionally, catalyzes the synthesis of GMP from XMP. The sequence is that of GMP synthase [glutamine-hydrolyzing] from Rhizobium etli (strain ATCC 51251 / DSM 11541 / JCM 21823 / NBRC 15573 / CFN 42).